The chain runs to 166 residues: Interferon gamma (166 aa).

The first 23 residues, 1–23, serve as a signal peptide directing secretion; it reads MKYTSYILAFQLCVVLGSLGCYC. Position 24 is a pyrrolidone carboxylic acid (Q24). N48, N86, and N120 each carry an N-linked (GlcNAc...) asparagine glycan.

This sequence belongs to the type II (or gamma) interferon family. Homodimer. Interacts with IFNGR1 (via extracellular domain); this interaction promotes IFNGR1 dimerization. As to expression, released primarily from activated T lymphocytes.

It is found in the secreted. In terms of biological role, type II interferon produced by immune cells such as T-cells and NK cells that plays crucial roles in antimicrobial, antiviral, and antitumor responses by activating effector immune cells and enhancing antigen presentation. Primarily signals through the JAK-STAT pathway after interaction with its receptor IFNGR1 to affect gene regulation. Upon IFNG binding, IFNGR1 intracellular domain opens out to allow association of downstream signaling components JAK2, JAK1 and STAT1, leading to STAT1 activation, nuclear translocation and transcription of IFNG-regulated genes. Many of the induced genes are transcription factors such as IRF1 that are able to further drive regulation of a next wave of transcription. Plays a role in class I antigen presentation pathway by inducing a replacement of catalytic proteasome subunits with immunoproteasome subunits. In turn, increases the quantity, quality, and repertoire of peptides for class I MHC loading. Increases the efficiency of peptide generation also by inducing the expression of activator PA28 that associates with the proteasome and alters its proteolytic cleavage preference. Up-regulates as well MHC II complexes on the cell surface by promoting expression of several key molecules such as cathepsins B/CTSB, H/CTSH, and L/CTSL. Participates in the regulation of hematopoietic stem cells during development and under homeostatic conditions by affecting their development, quiescence, and differentiation. This chain is Interferon gamma (IFNG), found in Callithrix jacchus (White-tufted-ear marmoset).